We begin with the raw amino-acid sequence, 130 residues long: uncharacterized protein (130 aa).

The N-terminal stretch at 1–26 is a signal peptide; it reads MINNFKGILIIILSFLFLLLFKYSNA. An N-linked (GlcNAc...) asparagine glycan is attached at Asn-58.

The protein belongs to the Dictyostelium gerABC family.

It is found in the secreted. This is an uncharacterized protein from Dictyostelium discoideum (Social amoeba).